The following is a 516-amino-acid chain: Propionyl-CoA carboxylase, carboxyltransferase subunit (516 aa).

The interval 1-32 (MTMEDRIDELREKREEALKGGGEDRIASQHDK) is disordered. The region spanning 3 to 259 (MEDRIDELRE…NNVEDPPRVE (257 aa)) is the CoA carboxyltransferase N-terminal domain. A CoA carboxyltransferase C-terminal domain is found at 263–509 (DPERVADELE…KSKRKSQPDK (247 aa)).

This sequence belongs to the AccD/PCCB family. As to quaternary structure, the propionyl coenzyme A carboxylase (PCC) complex is composed of three subunits: PccA (biotin carboxylase and biotin-carboxyl carrier), PccB (carboxyltransferase) and PccX.

The catalysed reaction is propanoyl-CoA + hydrogencarbonate + ATP = (S)-methylmalonyl-CoA + ADP + phosphate + H(+). It participates in metabolic intermediate metabolism; propanoyl-CoA degradation; succinyl-CoA from propanoyl-CoA: step 1/3. Its function is as follows. Part of the propionyl coenzyme A carboxylase (PCC) complex involved in propionate utilization and in the production of the poly(3-hydroxybutyrate-co-3-hydroxyvalerate)(PHBV), which is a water-insoluble biopolymer used as intracellular energy reserve material when cells grow under conditions of nutrient limitation. The complex catalyzes the carboxylation of propionyl-CoA to methylmalonyl-CoA. PCC is also able to catalyze the carboxylation of acetyl-CoA. This Haloferax mediterranei (strain ATCC 33500 / DSM 1411 / JCM 8866 / NBRC 14739 / NCIMB 2177 / R-4) (Halobacterium mediterranei) protein is Propionyl-CoA carboxylase, carboxyltransferase subunit.